The sequence spans 606 residues: Gamma-aminobutyric acid receptor subunit beta (606 aa).

The N-terminal stretch at 1–44 is a signal peptide; that stretch reads MSDSKMDKLARMAPLPRTPLLTIWLAINMALIAQETGHKRIHTV. At 45-268 the chain is on the extracellular side; it reads QAATGGGSML…CEIQFVRSMG (224 aa). An N-linked (GlcNAc...) asparagine glycan is attached at asparagine 58. A disulfide bond links cysteine 185 and cysteine 199. The N-linked (GlcNAc...) asparagine glycan is linked to asparagine 253. A run of 3 helical transmembrane segments spans residues 269–291, 297–316, and 333–356; these read YYLIQIYIPSGLIVIISWVSFWL, PARVALGVTTVLTMTTLMSS, and YLGTCFVMVFASLLEYATVGYMAK. Topologically, residues 357-568 are cytoplasmic; the sequence is RIQMRKQRFM…LGITPSDIDK (212 aa). Disordered stretches follow at residues 376 to 451 and 482 to 542; these read KQQL…VSNR and HDPK…AAVP. A compositionally biased stretch (low complexity) spans 381–395; that stretch reads GANQQQANPNPNANV. Positions 396 to 425 are enriched in gly residues; the sequence is GGPGGVGVGPGGPGGPGGGVNVGVGMGMGP. Residues 430–443 show a composition bias toward basic residues; sequence GHGHHAHSHGHPHA. Residues 499 to 536 show a composition bias toward gly residues; that stretch reads GGRGGPQSHGPGPGQGGGPPGGGGGGGGGGGPPEGGGD. A helical transmembrane segment spans residues 569–590; the sequence is YSRIVFPVCFVCFNLMYWIIYL.

The protein belongs to the ligand-gated ion channel (TC 1.A.9) family. Gamma-aminobutyric acid receptor (TC 1.A.9.5) subfamily. Forms oligomers. Interacts with Nlg4; the interaction mediates Rdl clustering. Interacts with Fbxl4; the interaction mediates Rdl degradation. Expressed in different parts of the brain: the mushroom bodies (alpha, alpha', beta, beta', gamma lobes and peduncles), the neurons projecting to the columnar-type neuron LC9 optic glomerulus, in interneurons connecting the paired olfactory lobes, antennal lobes, PDF-expressing small and large ventral lateral neurons (LNvs) of the circadian clock and lobula columnar neuron 11 (LC11) (at protein level). Expressed in all major ON pathway medulla neurons (Mi1, Tm3, Mi4, and Mi9) and in OFF pathway neurons (Tm1, Tm2, Tm4, and Tm9).

It is found in the cell membrane. The protein resides in the postsynaptic cell membrane. The protein localises to the cell projection. Its subcellular location is the dendrite. It localises to the axon. With respect to regulation, activated by agonist muscimol. Insensitive to zinc, glycine, glutamate, and baclofen, loreclezole, to antagonist bicuculline, glycine-receptor antagonist strychnine, and nonselective GABA and glycine antagonist RU 5135. Insensitive to flunitrazepam, pentobarbitone or pregnane steroids such as 5alpha-pregnan-3alpha-ol-20-one. Inhibited by insecticides picrotoxin (PTX), cyclodiene dieldrin, TBPS and lindane. Inhibited by ivermectin, fipronil and pyrafluprole. Its activity is regulated as follows. Inhibited by insecticides picrotoxin (PTX). Gamma-aminobutyric acid (GABA) receptor voltage channel subunit. GABA, an inhibitory neurotransmitter, mediates neuronal inhibition by binding to the GABA receptor and opening an integral chloride channel. Together with glutamate receptor GluClalpha, plays an important role in the visual response by regulating the activity of ON/OFF-selective neurons. Plays a role in promoting sleep and sleep latency by regulating the activity of peptidergic PDF neurons. In large ventral lateral clock neurons, clustering is mediated by Nlg4 and protein levels undergo daily degradation in response to the circadian clock. In neurons in the mushroom bodies, has a role in odor memory acquisition where it inhibits appetitive and aversive olfactory learning, probably upstream of Adcy1/adenylate cyclase 1 and GTPase activating protein Nf1. In male-specific GABAergic neurons, plays a role in inhibiting male aggressive behavior during courtship. Its function is as follows. Gamma-aminobutyric acid (GABA) receptor voltage channel subunit. In Drosophila melanogaster (Fruit fly), this protein is Gamma-aminobutyric acid receptor subunit beta (Rdl).